The following is a 324-amino-acid chain: Phospho-N-acetylmuramoyl-pentapeptide-transferase (324 aa).

The next 10 membrane-spanning stretches (helical) occupy residues 9–29, 53–73, 77–97, 117–137, 149–169, 176–196, 201–221, 227–247, 253–273, and 304–324; these read TFAV…PFLV, TMGA…FSFI, VSAA…LGFL, FLGQ…SDFA, IDLG…FSNA, LDGL…VIAF, MDVA…LLFN, IFMG…VSIL, LLLL…LQVF, and VLTF…VVIF.

Belongs to the glycosyltransferase 4 family. MraY subfamily. Mg(2+) is required as a cofactor.

It localises to the cell membrane. The enzyme catalyses UDP-N-acetyl-alpha-D-muramoyl-L-alanyl-gamma-D-glutamyl-meso-2,6-diaminopimeloyl-D-alanyl-D-alanine + di-trans,octa-cis-undecaprenyl phosphate = di-trans,octa-cis-undecaprenyl diphospho-N-acetyl-alpha-D-muramoyl-L-alanyl-D-glutamyl-meso-2,6-diaminopimeloyl-D-alanyl-D-alanine + UMP. It participates in cell wall biogenesis; peptidoglycan biosynthesis. Functionally, catalyzes the initial step of the lipid cycle reactions in the biosynthesis of the cell wall peptidoglycan: transfers peptidoglycan precursor phospho-MurNAc-pentapeptide from UDP-MurNAc-pentapeptide onto the lipid carrier undecaprenyl phosphate, yielding undecaprenyl-pyrophosphoryl-MurNAc-pentapeptide, known as lipid I. The sequence is that of Phospho-N-acetylmuramoyl-pentapeptide-transferase from Listeria innocua serovar 6a (strain ATCC BAA-680 / CLIP 11262).